A 231-amino-acid chain; its full sequence is ATP-dependent dethiobiotin synthetase BioD (231 aa).

12-17 (DVGKTV) provides a ligand contact to ATP. Residue Thr-16 participates in Mg(2+) binding. The active site involves Lys-37. Substrate is bound at residue Thr-41. ATP-binding positions include Asp-50, 109–112 (EGAG), 170–171 (GS), and 200–202 (PAG). Positions 50 and 109 each coordinate Mg(2+).

This sequence belongs to the dethiobiotin synthetase family. In terms of assembly, homodimer. Mg(2+) serves as cofactor.

It localises to the cytoplasm. It catalyses the reaction (7R,8S)-7,8-diammoniononanoate + CO2 + ATP = (4R,5S)-dethiobiotin + ADP + phosphate + 3 H(+). It functions in the pathway cofactor biosynthesis; biotin biosynthesis; biotin from 7,8-diaminononanoate: step 1/2. In terms of biological role, catalyzes a mechanistically unusual reaction, the ATP-dependent insertion of CO2 between the N7 and N8 nitrogen atoms of 7,8-diaminopelargonic acid (DAPA, also called 7,8-diammoniononanoate) to form a ureido ring. The chain is ATP-dependent dethiobiotin synthetase BioD from Rhodococcus jostii (strain RHA1).